The primary structure comprises 218 residues: 23 kDa integral membrane protein (218 aa).

Residues 1-12 (MATLGTGMRCLK) lie on the Cytoplasmic side of the membrane. A helical membrane pass occupies residues 13–36 (SCVFVLNIICLLCSLVLIGAGAYV). The Extracellular segment spans residues 37–55 (EVKFSQYGDNLHKVWQAAP). A helical membrane pass occupies residues 56 to 71 (IAIIVVGVIILIVSFL). The Cytoplasmic segment spans residues 72–82 (GCCGAIKENVC). The helical transmembrane segment at 83-108 (MLYMYAFFLVVLLIAELAAAIVAVVY) threads the bilayer. Residues 109 to 183 (KDRIDSEIDA…SVFGAFLKRN (75 aa)) are Extracellular-facing. The N-linked (GlcNAc...) asparagine glycan is linked to asparagine 165. Residues 184 to 205 (LVIVACVAFGVCFFQLLSIVIA) form a helical membrane-spanning segment. Residues 206 to 218 (CCLGRQIKEYENV) lie on the Cytoplasmic side of the membrane.

It belongs to the tetraspanin (TM4SF) family.

The protein localises to the membrane. This Schistosoma mansoni (Blood fluke) protein is 23 kDa integral membrane protein.